Here is a 155-residue protein sequence, read N- to C-terminus: Small ribosomal subunit protein uS7c (155 aa).

Belongs to the universal ribosomal protein uS7 family. As to quaternary structure, part of the 30S ribosomal subunit.

It is found in the plastid. The protein resides in the chloroplast. In terms of biological role, one of the primary rRNA binding proteins, it binds directly to 16S rRNA where it nucleates assembly of the head domain of the 30S subunit. The chain is Small ribosomal subunit protein uS7c (rps7) from Houttuynia cordata (Chameleon plant).